Reading from the N-terminus, the 246-residue chain is 3-deoxy-manno-octulosonate cytidylyltransferase (246 aa).

It belongs to the KdsB family.

Its subcellular location is the cytoplasm. It carries out the reaction 3-deoxy-alpha-D-manno-oct-2-ulosonate + CTP = CMP-3-deoxy-beta-D-manno-octulosonate + diphosphate. It participates in nucleotide-sugar biosynthesis; CMP-3-deoxy-D-manno-octulosonate biosynthesis; CMP-3-deoxy-D-manno-octulosonate from 3-deoxy-D-manno-octulosonate and CTP: step 1/1. It functions in the pathway bacterial outer membrane biogenesis; lipopolysaccharide biosynthesis. Functionally, activates KDO (a required 8-carbon sugar) for incorporation into bacterial lipopolysaccharide in Gram-negative bacteria. This chain is 3-deoxy-manno-octulosonate cytidylyltransferase, found in Chloroherpeton thalassium (strain ATCC 35110 / GB-78).